The chain runs to 283 residues: Extracellular metalloprotease MGG_08041 (283 aa).

Positions 1 to 22 (MQINVVKTFLFALAASSVSALA) are cleaved as a signal peptide. A glycan (N-linked (GlcNAc...) asparagine) is linked at N55. Residue H197 participates in Zn(2+) binding. E198 is an active-site residue. Position 201 (H201) interacts with Zn(2+). A disulfide bridge connects residues C233 and C260.

This sequence belongs to the peptidase M43B family.

Its subcellular location is the secreted. Its function is as follows. Secreted metalloproteinase that allows assimilation of proteinaceous substrates. This is Extracellular metalloprotease MGG_08041 from Pyricularia oryzae (strain 70-15 / ATCC MYA-4617 / FGSC 8958) (Rice blast fungus).